A 365-amino-acid chain; its full sequence is Putative glycosyltransferase C06E1.7 (365 aa).

This sequence belongs to the glycosyltransferase 11 family.

This chain is Putative glycosyltransferase C06E1.7, found in Caenorhabditis elegans.